Consider the following 435-residue polypeptide: Cytochrome c biogenesis protein CcsB (435 aa).

Helical transmembrane passes span leucine 14–leucine 34, serine 72–arginine 92, and valine 162–alanine 182.

Belongs to the Ccs1/CcsB family. In terms of assembly, may interact with CcsA.

It is found in the cellular thylakoid membrane. Functionally, required during biogenesis of c-type cytochromes (cytochrome c6 and cytochrome f) at the step of heme attachment. The sequence is that of Cytochrome c biogenesis protein CcsB from Synechococcus sp. (strain CC9311).